A 599-amino-acid chain; its full sequence is mRNA export factor MEX67 (599 aa).

The residue at position 2 (serine 2) is an N-acetylserine. 2 LRR repeats span residues 163 to 184 (IVES…STLA) and 189 to 210 (NLKN…EVWK). One can recognise an LRRCT domain in the interval 224–262 (NPITTDKLYRTEMLRLFPKLVVLDNVIVRDEQKLQTVYS). An NTF2 domain is found at 280–467 (SSTDFATNFL…VIIASDLLTV (188 aa)). The tract at residues 408–439 (KPELESNKKTGKNNYQKNRRYNHGYNSTSNNK) is disordered. The TAP-C domain maps to 546–599 (PVQLELLNKLHLETKLNAEYTFMLAEQSNWNYEVAIKGFQSSMNGIPREAFVQF).

The protein belongs to the NXF family. Interacts with nucleoporin complex NUP84 and MTR2. Interacts with MIP6.

Its subcellular location is the nucleus. The protein resides in the cytoplasm. Functionally, involved in the export of mRNA from the nucleus to the cytoplasm. In Saccharomyces cerevisiae (strain ATCC 204508 / S288c) (Baker's yeast), this protein is mRNA export factor MEX67 (MEX67).